Here is a 271-residue protein sequence, read N- to C-terminus: uncharacterized protein (271 aa).

In terms of domain architecture, DOD-type homing endonuclease spans 77–205 (IIGVYFGDAN…SKELLKKLDV (129 aa)).

This is an uncharacterized protein from Methanocaldococcus jannaschii (strain ATCC 43067 / DSM 2661 / JAL-1 / JCM 10045 / NBRC 100440) (Methanococcus jannaschii).